The sequence spans 111 residues: Large ribosomal subunit protein uL22 (111 aa).

It belongs to the universal ribosomal protein uL22 family. Part of the 50S ribosomal subunit.

In terms of biological role, this protein binds specifically to 23S rRNA; its binding is stimulated by other ribosomal proteins, e.g. L4, L17, and L20. It is important during the early stages of 50S assembly. It makes multiple contacts with different domains of the 23S rRNA in the assembled 50S subunit and ribosome. Its function is as follows. The globular domain of the protein is located near the polypeptide exit tunnel on the outside of the subunit, while an extended beta-hairpin is found that lines the wall of the exit tunnel in the center of the 70S ribosome. This chain is Large ribosomal subunit protein uL22, found in Mycoplasma mycoides subsp. mycoides SC (strain CCUG 32753 / NCTC 10114 / PG1).